The sequence spans 283 residues: NAD kinase (283 aa).

The active-site Proton acceptor is aspartate 61. NAD(+)-binding positions include 61–62, 134–135, arginine 145, aspartate 164, 175–180, and glutamine 234; these read DG, ND, and TAYNLS.

This sequence belongs to the NAD kinase family. A divalent metal cation serves as cofactor.

The protein localises to the cytoplasm. The enzyme catalyses NAD(+) + ATP = ADP + NADP(+) + H(+). Involved in the regulation of the intracellular balance of NAD and NADP, and is a key enzyme in the biosynthesis of NADP. Catalyzes specifically the phosphorylation on 2'-hydroxyl of the adenosine moiety of NAD to yield NADP. This Clostridium kluyveri (strain NBRC 12016) protein is NAD kinase.